Consider the following 100-residue polypeptide: MHLMPREQEKLMIVVAADLARRRQARGLKLNFPESVAIISYELIEGARDGRTVADLMSYGTTLLTRDDVMEGVPEMIHDVQIEATFPDGTKLVTVHDPIR.

Belongs to the urease gamma subunit family. Heterotrimer of UreA (gamma), UreB (beta) and UreC (alpha) subunits. Three heterotrimers associate to form the active enzyme.

The protein resides in the cytoplasm. It carries out the reaction urea + 2 H2O + H(+) = hydrogencarbonate + 2 NH4(+). Its pathway is nitrogen metabolism; urea degradation; CO(2) and NH(3) from urea (urease route): step 1/1. The polypeptide is Urease subunit gamma (Arthrobacter sp. (strain FB24)).